The chain runs to 536 residues: SNW domain-containing protein 1 (536 aa).

Positions 1–46 (MALTSFLPAPTQLSQDQLEAEEKARSQRSRQTSLVSSRREPPPYGY) are disordered. Ala-2 carries the post-translational modification N-acetylalanine. Ser-14 is subject to Phosphoserine. Lys-23 is covalently cross-linked (Glycyl lysine isopeptide (Lys-Gly) (interchain with G-Cter in SUMO2)). Positions 59 to 79 (GDGGAFPEIHVAQYPLDMGRK) are interaction with PPIL1. Glycyl lysine isopeptide (Lys-Gly) (interchain with G-Cter in SUMO2) cross-links involve residues Lys-81, Lys-97, Lys-115, Lys-122, Lys-141, Lys-158, and Lys-170. Residues 174-339 (AQYIRYTPSQ…KARERRAGIK (166 aa)) are SNW. Phosphoserine is present on residues Ser-182 and Ser-190. Lys-193 participates in a covalent cross-link: Glycyl lysine isopeptide (Lys-Gly) (interchain with G-Cter in SUMO2). The tract at residues 209-233 (PPRFKINKKIPRGPPSPPAPVMHSP) is disordered. A phosphoserine mark is found at Ser-224, Ser-232, and Ser-234. Glycyl lysine isopeptide (Lys-Gly) (interchain with G-Cter in SUMO2) cross-links involve residues Lys-240, Lys-258, Lys-286, Lys-339, Lys-344, Lys-416, Lys-441, and Lys-452. A disordered region spans residues 311–386 (KMAQKEKEKH…RSKLQRNENR (76 aa)). 2 stretches are compositionally biased toward basic and acidic residues: residues 472–489 (FVPDKEFSGSDRRQRGRE) and 503–530 (KFLEEAKQHGGSKRPSDSSRPKEHEHEG). Residues 472-536 (FVPDKEFSGS…EHEGKKRRKE (65 aa)) form a disordered region. A phosphoserine mark is found at Ser-479 and Ser-481. A Glycyl lysine isopeptide (Lys-Gly) (interchain with G-Cter in SUMO2) cross-link involves residue Lys-509.

This sequence belongs to the SNW family. In terms of assembly, identified in the spliceosome C complex. Associates with U4/U6-U5 tri-small nuclear ribonucleoproteins (U4/U6-U5 tri-snRNPs). Component of the minor spliceosome, which splices U12-type introns. Interacts with SKI, SMAD2,SMAD3, RBPJ, RB1, PABPN1, MAGEA1, SIRT1, FOXN3, U2AF2, PPIL1, DAXX and ATP1B4. Interacts with VDR and RXRA; preferentially associates with VDR:RXRA heterodimers. Interacts with NCOR2. Interacts with MAML1. Interacts with NOTCH1 NICD; the interaction involves multimerized NOTCH1 NICD. Forms a complex with NOTCH1 NICD and MAML1; the association is dissociated by RBPJ. Associates with positive transcription elongation factor b (P-TEFb). Component of the SNARP complex which consists at least of SNIP1, SNW1, THRAP3, BCLAF1 and PNN.

It is found in the nucleus. In terms of biological role, involved in pre-mRNA splicing as component of the spliceosome. As a component of the minor spliceosome, involved in the splicing of U12-type introns in pre-mRNAs. Required in the specific splicing of CDKN1A pre-mRNA; the function probably involves the recruitment of U2AF2 to the mRNA. May recruit PPIL1 to the spliceosome. May be involved in cyclin-D1/CCND1 mRNA stability through the SNARP complex which associates with both the 3'end of the CCND1 gene and its mRNA. Involved in transcriptional regulation. Modulates TGF-beta-mediated transcription via association with SMAD proteins, MYOD1-mediated transcription via association with PABPN1, RB1-mediated transcriptional repression, and retinoid-X receptor (RXR)- and vitamin D receptor (VDR)-dependent gene transcription in a cell line-specific manner probably involving coactivators NCOA1 and GRIP1. Is involved in NOTCH1-mediated transcriptional activation. Binds to multimerized forms of Notch intracellular domain (NICD) and is proposed to recruit transcriptional coactivators such as MAML1 to form an intermediate preactivation complex which associates with DNA-bound CBF-1/RBPJ to form a transcriptional activation complex by releasing SNW1 and redundant NOTCH1 NICD. This is SNW domain-containing protein 1 (SNW1) from Bos taurus (Bovine).